A 240-amino-acid polypeptide reads, in one-letter code: MSVKGVEMPEMTWDLDVGNKWRRRKALSRIHRFWECRLRVWWLSDAGVRETDPPRPRRRPTWMTAVFHVICAVLLTLMIMAIGALIAYLRYYHQDSWRDMLHDLFCGCHYPEKCRRHHERQRRRRRAMDVPDPELGDPARRPLNGAMYYGSGCRFDTVEMVDETRPAPPALSSPETGDDSNDDAVAGGGAGGVTSPATRTTSPNALLPEWMDAVHVAVQAAVQATVQVSGPRENAVSPAT.

The chain crosses the membrane as a helical span at residues valine 69–leucine 89. Disordered regions lie at residues glutamate 119–proline 142 and threonine 164–arginine 199.

The protein belongs to the HHV-5 UL136 protein family. As to quaternary structure, interacts with host ATP1B1.

It is found in the host membrane. This chain is Protein UL136 (UL136), found in Human cytomegalovirus (strain Towne) (HHV-5).